Here is a 673-residue protein sequence, read N- to C-terminus: G-protein-signaling modulator 1 (673 aa).

The interval 1–507 is mediates association with membranes; it reads MASPAPPAAE…DLLSKFQSSR (507 aa). TPR repeat units lie at residues 28–61, 66–99, 106–139, 146–178, 180–199, 206–239, 246–279, 286–319, and 326–359; these read CLEL…GTED, SAIY…ARTI, AKAS…AQEQ, ARAL…PPDV, ETLH…VKEL, GRAY…AKEF, RRAY…SRQI, AQAC…AQEL, and GRAC…SQEI. An interaction with STK11/LKB1 region spans residues 361–485; the sequence is DRNGELTARM…VRVQVPRTGI (125 aa). Ser410 carries the post-translational modification Phosphoserine. Omega-N-methylarginine is present on Arg418. Residues 420-439 are compositionally biased toward basic and acidic residues; the sequence is PLDREQNGETHHTGDWRGPS. The tract at residues 420-477 is disordered; that stretch reads PLDREQNGETHHTGDWRGPSRDSLPLPMRSRKYQEGPDAIERRPREGSHSPLDSADVR. Phosphoserine is present on residues Ser442, Ser467, Ser469, Ser490, and Ser491. Basic and acidic residues predominate over residues 451-467; that stretch reads KYQEGPDAIERRPREGS. The 23-residue stretch at 493–515 folds into the GoLoco 1 domain; that stretch reads EECFFDLLSKFQSSRMDDQRCPL. The segment at 510–544 is disordered; sequence DQRCPLEEGQAGAAEATAAPTLEERAAQPSVTASP. Positions 516–530 are enriched in low complexity; that stretch reads EEGQAGAAEATAAPT. Residues Ser543 and Ser567 each carry the phosphoserine modification. GoLoco domains follow at residues 546–568, 594–616, and 628–650; these read TEEF…RASV, GDEF…RCPP, and DEDF…RVDL. Disordered stretches follow at residues 609–628 and 645–673; these read IDDQ…TMPD and EQRV…PGAS. Ser653 carries the post-translational modification Phosphoserine.

This sequence belongs to the GPSM family. In terms of assembly, interacts with INSC/inscuteable and FRMPD1. Interacts with GNAI1, GNAI2 and GNAI3 preferentially in their GDP-bound state. May also interact with GNAO1. Interacts with STK11/LKB1 and MACF1. Post-translationally, phosphorylation regulates interaction with G(i/o) alpha. As to expression, isoform 4 is specifically expressed in brain by neurons and also detected in testis, liver, kidney, heart and pancreas (at protein level). Highly expressed in cerebellum and subventricular zone-olfactory bulb system. Isoform 2 and isoform 3 are specifically expressed in heart and are also detected in brain.

Its subcellular location is the endoplasmic reticulum membrane. It is found in the golgi apparatus membrane. The protein resides in the cell membrane. It localises to the cytoplasm. The protein localises to the cytosol. In terms of biological role, guanine nucleotide dissociation inhibitor (GDI) which functions as a receptor-independent activator of heterotrimeric G-protein signaling. Keeps G(i/o) alpha subunit in its GDP-bound form thus uncoupling heterotrimeric G-proteins signaling from G protein-coupled receptors. Controls spindle orientation and asymmetric cell fate of cerebral cortical progenitors. May also be involved in macroautophagy in intestinal cells. May play a role in drug addiction. This Rattus norvegicus (Rat) protein is G-protein-signaling modulator 1 (Gpsm1).